Here is a 238-residue protein sequence, read N- to C-terminus: Nuclear transcription factor Y subunit B-9 (238 aa).

Residues 64–70 mediate DNA binding; that stretch reads MPIANVI. The segment at 91 to 102 is subunit association domain (SAD); that stretch reads IQECVSEYISFV. Residues 203 to 238 form a disordered region; sequence RYYQNGSSGQDESSVGGGSSSSINGMPAFDHYGQYK. A compositionally biased stretch (low complexity) spans 208–227; the sequence is GSSGQDESSVGGGSSSSING.

It belongs to the NFYB/HAP3 subunit family. In terms of assembly, heterotrimeric transcription factor composed of three components, NF-YA, NF-YB and NF-YC. NF-YB and NF-YC must interact and dimerize for NF-YA association and DNA binding. Interacts with PRN1. Expressed in green siliques. Present in etiolated seedlings.

The protein localises to the nucleus. Its function is as follows. Component of the NF-Y/HAP transcription factor complex. The NF-Y complex stimulates the transcription of various genes by recognizing and binding to a CCAAT motif in promoters. Acts as a central regulator of the embryogenesis. Required for the speciation of cotyledon identity and the completion of embryo maturation. Controls seed storage protein genes through the regulation of FUS3 and ABI3. Involved in the blue light (BL) and abscisic acid (ABA) signaling pathways. The polypeptide is Nuclear transcription factor Y subunit B-9 (NFYB9) (Arabidopsis thaliana (Mouse-ear cress)).